The chain runs to 263 residues: Endonuclease 8 (263 aa).

Pro-2 serves as the catalytic Schiff-base intermediate with DNA. Glu-3 functions as the Proton donor in the catalytic mechanism. The Proton donor; for beta-elimination activity role is filled by Lys-53. Residues Gln-70, Arg-125, and Asn-169 each contribute to the DNA site. The segment at 229–263 adopts an FPG-type zinc-finger fold; the sequence is KVFHRDGELCERCGGIIEKTTLSSRPFYWCPGCQH. Catalysis depends on Arg-253, which acts as the Proton donor; for delta-elimination activity.

The protein belongs to the FPG family. It depends on Zn(2+) as a cofactor.

The enzyme catalyses 2'-deoxyribonucleotide-(2'-deoxyribose 5'-phosphate)-2'-deoxyribonucleotide-DNA = a 3'-end 2'-deoxyribonucleotide-(2,3-dehydro-2,3-deoxyribose 5'-phosphate)-DNA + a 5'-end 5'-phospho-2'-deoxyribonucleoside-DNA + H(+). Its function is as follows. Involved in base excision repair of DNA damaged by oxidation or by mutagenic agents. Acts as a DNA glycosylase that recognizes and removes damaged bases. Has a preference for oxidized pyrimidines, such as thymine glycol, 5,6-dihydrouracil and 5,6-dihydrothymine. Has AP (apurinic/apyrimidinic) lyase activity and introduces nicks in the DNA strand. Cleaves the DNA backbone by beta-delta elimination to generate a single-strand break at the site of the removed base with both 3'- and 5'-phosphates. In Shigella flexneri serotype 5b (strain 8401), this protein is Endonuclease 8.